A 483-amino-acid chain; its full sequence is NADH-quinone oxidoreductase subunit N (483 aa).

Transmembrane regions (helical) follow at residues 13–33, 39–57, 76–96, 110–130, 131–151, 165–185, 206–226, 240–260, 277–297, 302–322, 330–350, 373–393, 406–426, and 459–479; these read ALPE…DAAV, YLAY…FLTV, PLSD…LVYS, FFVL…ASHF, LTLY…VALQ, FVLG…VYGV, IPLV…LGAV, PTAM…AFVV, MLVI…IAQS, MFAY…LAGS, MFYV…ILLL, LAFV…TVGF, IGYV…AFYY, and LAVL…VQAI.

The protein belongs to the complex I subunit 2 family. In terms of assembly, NDH-1 is composed of 14 different subunits. Subunits NuoA, H, J, K, L, M, N constitute the membrane sector of the complex.

Its subcellular location is the cell inner membrane. The enzyme catalyses a quinone + NADH + 5 H(+)(in) = a quinol + NAD(+) + 4 H(+)(out). In terms of biological role, NDH-1 shuttles electrons from NADH, via FMN and iron-sulfur (Fe-S) centers, to quinones in the respiratory chain. The immediate electron acceptor for the enzyme in this species is believed to be ubiquinone. Couples the redox reaction to proton translocation (for every two electrons transferred, four hydrogen ions are translocated across the cytoplasmic membrane), and thus conserves the redox energy in a proton gradient. The sequence is that of NADH-quinone oxidoreductase subunit N from Thiobacillus denitrificans (strain ATCC 25259 / T1).